The primary structure comprises 537 residues: 2-succinyl-5-enolpyruvyl-6-hydroxy-3-cyclohexene-1-carboxylate synthase (537 aa).

Belongs to the TPP enzyme family. MenD subfamily. In terms of assembly, homodimer. It depends on Mg(2+) as a cofactor. Requires Mn(2+) as cofactor. The cofactor is thiamine diphosphate.

It catalyses the reaction isochorismate + 2-oxoglutarate + H(+) = 5-enolpyruvoyl-6-hydroxy-2-succinyl-cyclohex-3-ene-1-carboxylate + CO2. It functions in the pathway quinol/quinone metabolism; 1,4-dihydroxy-2-naphthoate biosynthesis; 1,4-dihydroxy-2-naphthoate from chorismate: step 2/7. It participates in quinol/quinone metabolism; menaquinone biosynthesis. Functionally, catalyzes the thiamine diphosphate-dependent decarboxylation of 2-oxoglutarate and the subsequent addition of the resulting succinic semialdehyde-thiamine pyrophosphate anion to isochorismate to yield 2-succinyl-5-enolpyruvyl-6-hydroxy-3-cyclohexene-1-carboxylate (SEPHCHC). This chain is 2-succinyl-5-enolpyruvyl-6-hydroxy-3-cyclohexene-1-carboxylate synthase, found in Nocardioides sp. (strain ATCC BAA-499 / JS614).